The sequence spans 157 residues: 2-C-methyl-D-erythritol 2,4-cyclodiphosphate synthase (157 aa).

Aspartate 8 and histidine 10 together coordinate a divalent metal cation. Residues 8-10 (DVH) and 34-35 (HS) contribute to the 4-CDP-2-C-methyl-D-erythritol 2-phosphate site. Histidine 42 contacts a divalent metal cation. 4-CDP-2-C-methyl-D-erythritol 2-phosphate contacts are provided by residues 56-58 (DIG), 61-65 (FPDTD), 100-106 (AQAPKMA), 132-135 (TTTE), phenylalanine 139, and arginine 142.

It belongs to the IspF family. As to quaternary structure, homotrimer. The cofactor is a divalent metal cation.

It catalyses the reaction 4-CDP-2-C-methyl-D-erythritol 2-phosphate = 2-C-methyl-D-erythritol 2,4-cyclic diphosphate + CMP. The protein operates within isoprenoid biosynthesis; isopentenyl diphosphate biosynthesis via DXP pathway; isopentenyl diphosphate from 1-deoxy-D-xylulose 5-phosphate: step 4/6. Involved in the biosynthesis of isopentenyl diphosphate (IPP) and dimethylallyl diphosphate (DMAPP), two major building blocks of isoprenoid compounds. Catalyzes the conversion of 4-diphosphocytidyl-2-C-methyl-D-erythritol 2-phosphate (CDP-ME2P) to 2-C-methyl-D-erythritol 2,4-cyclodiphosphate (ME-CPP) with a corresponding release of cytidine 5-monophosphate (CMP). This Azotobacter vinelandii (strain DJ / ATCC BAA-1303) protein is 2-C-methyl-D-erythritol 2,4-cyclodiphosphate synthase.